Here is a 307-residue protein sequence, read N- to C-terminus: Myoblast determination protein 1 homolog (307 aa).

The region spanning 109–160 (DRRKAATLRERRRLSKVNEAFETLKRCTNTNPNQRLPKVEILRNAISYIESL) is the bHLH domain. A disordered region spans residues 271-307 (TATSSGPPPVDGRGSPGPLQASSPRSSREPNLIYQVL).

Efficient DNA binding requires dimerization with another bHLH protein. In terms of tissue distribution, expressed in fast and myotomal muscle. Very weak expression in brain, skin and gonads.

Its subcellular location is the nucleus. May act as a transcriptional activator that promotes transcription of muscle-specific target genes and plays a role in muscle differentiation. This chain is Myoblast determination protein 1 homolog (myod), found in Takifugu rubripes (Japanese pufferfish).